A 616-amino-acid chain; its full sequence is RNA-directed RNA polymerase (616 aa).

It carries out the reaction RNA(n) + a ribonucleoside 5'-triphosphate = RNA(n+1) + diphosphate. In terms of biological role, RNA-dependent RNA polymerase which replicates the viral genome. The protein is RNA-directed RNA polymerase of White clover cryptic virus 1 (isolate Boccardo/2004) (WCCV-1).